The following is a 492-amino-acid chain: 2,3-bisphosphoglycerate-independent phosphoglycerate mutase (492 aa).

The Mn(2+) site is built by Asp-11 and Ser-61. Ser-61 acts as the Phosphoserine intermediate in catalysis. Substrate is bound by residues His-118, Arg-147 to Asp-148, Arg-178, Arg-184, Arg-248 to Arg-251, and Lys-320. The Mn(2+) site is built by Asp-386, His-390, Asp-427, His-428, and His-445.

The protein belongs to the BPG-independent phosphoglycerate mutase family. In terms of assembly, monomer. It depends on Mn(2+) as a cofactor.

It carries out the reaction (2R)-2-phosphoglycerate = (2R)-3-phosphoglycerate. The protein operates within carbohydrate degradation; glycolysis; pyruvate from D-glyceraldehyde 3-phosphate: step 3/5. Catalyzes the interconversion of 2-phosphoglycerate and 3-phosphoglycerate. This is 2,3-bisphosphoglycerate-independent phosphoglycerate mutase from Campylobacter jejuni subsp. doylei (strain ATCC BAA-1458 / RM4099 / 269.97).